The chain runs to 403 residues: SH3 and cysteine-rich domain-containing protein (403 aa).

The tract at residues 1–43 (MIPPSGAREDGVDGLPKETASAEQPPSPASTGSQESKLQKLKR) is disordered. The span at 21 to 36 (SAEQPPSPASTGSQES) shows a compositional bias: polar residues. The segment at 108 to 160 (AHAFQEHIFKKPTFCDVCNHMIVGTNAKHGLRCKACKMSIHHKCMDGLAPQRC) adopts a Phorbol-ester/DAG-type zinc-finger fold. Positions 212–253 (QRTKKSSSGSGSDSPHRTSTSDLVEVPEEADGPGDGYDLRKR) are disordered. SH3 domains lie at 286-345 (LQMN…RVHQ) and 348-403 (KIFR…LENI).

In terms of assembly, interacts (via SH3 domains) with CACNA1S. Interacts with CACNA1H. Interacts with CACNA1C.

The protein localises to the cytoplasm. The protein resides in the cytosol. Its subcellular location is the cell membrane. It is found in the sarcolemma. In terms of biological role, promotes expression of the ion channel CACNA1H at the cell membrane, and thereby contributes to the regulation of channel activity. Plays a minor and redundant role in promoting the expression of calcium channel CACNA1S at the cell membrane, and thereby contributes to increased channel activity. Slows down the inactivation rate of the calcium channel CACNA1C. The protein is SH3 and cysteine-rich domain-containing protein (STAC) of Bos taurus (Bovine).